A 132-amino-acid polypeptide reads, in one-letter code: MSAKASKAPASKAPAEKKPAAKKTSSSTDPSKKRTKARKETYSSYIYKVLKQTHPDTGISQKSMSILNSFVNDIFERIATESSKLAAYNKKSTISAREIQTAVRLILPGELAKHAVSEGTRAVTKYSSSTQA.

Positions 1-13 (MSAKASKAPASKA) are enriched in low complexity. Positions 1 to 39 (MSAKASKAPASKAPAEKKPAAKKTSSSTDPSKKRTKARK) are disordered. K7 carries the post-translational modification N6-acetyllysine; alternate. K7 participates in a covalent cross-link: Glycyl lysine isopeptide (Lys-Gly) (interchain with G-Cter in SUMO); alternate. Residue S11 is modified to Phosphoserine. K12 carries the post-translational modification N6-acetyllysine. An N6-acetyllysine; alternate modification is found at K17. K17 is covalently cross-linked (Glycyl lysine isopeptide (Lys-Gly) (interchain with G-Cter in SUMO); alternate). Residue K18 forms a Glycyl lysine isopeptide (Lys-Gly) (interchain with G-Cter in SUMO) linkage. Residue K125 forms a Glycyl lysine isopeptide (Lys-Gly) (interchain with G-Cter in ubiquitin) linkage.

This sequence belongs to the histone H2B family. As to quaternary structure, the nucleosome is a histone octamer containing two molecules each of H2A, H2B, H3 and H4 assembled in one H3-H4 heterotetramer and two H2A-H2B heterodimers. The octamer wraps approximately 147 bp of DNA. Monoubiquitinated by the UBC2-BRE1 complex to form H2BK123ub1. H2BK123ub1 gives a specific tag for epigenetic transcriptional activation and is also prerequisite for H3K4me and H3K79me formation. H2BK123ub1 also modulates the formation of double-strand breaks during meiosis and is a prerequisite for DNA-damage checkpoint activation. In terms of processing, phosphorylated by STE20 to form H2BS10ph during progression through meiotic prophase. May be correlated with chromosome condensation. Post-translationally, acetylated by GCN5 to form H2BK11ac and H2BK16ac. H2BK16ac can also be formed by ESA1. Acetylation of N-terminal lysines and particularly formation of H2BK11acK16ac has a positive effect on transcription. Sumoylation to form H2BK6su and probably also H2BK16su or H2BK17su, occurs preferentially near the telomeres and represses gene transcription.

It is found in the nucleus. It localises to the chromosome. Functionally, core component of nucleosome. Nucleosomes wrap and compact DNA into chromatin, limiting DNA accessibility to the cellular machineries which require DNA as a template. Histones thereby play a central role in transcription regulation, DNA repair, DNA replication and chromosomal stability. DNA accessibility is regulated via a complex set of post-translational modifications of histones, also called histone code, and nucleosome remodeling. This is Histone H2B.1 (HTB1) from Kluyveromyces lactis (strain ATCC 8585 / CBS 2359 / DSM 70799 / NBRC 1267 / NRRL Y-1140 / WM37) (Yeast).